The primary structure comprises 214 residues: uncharacterized protein (214 aa).

Residues 1-17 (MLKKIIILFLGVFVLSG) form the signal peptide. Residue cysteine 18 is the site of N-palmitoyl cysteine attachment. Residue cysteine 18 is the site of S-diacylglycerol cysteine attachment. Acidic residues predominate over residues 64–77 (DNLDDPEDDDDDYD). Disordered regions lie at residues 64-83 (DNLD…LRGE), 106-138 (YKAE…KERK), and 166-197 (TANQ…SKVK). A coiled-coil region spans residues 120–162 (TLSKANKKVRKDNTDKERKMQEELDQIKAMLRETKRDISKYTC).

The protein resides in the cell membrane. This is an uncharacterized protein from Rickettsia bellii (strain RML369-C).